The primary structure comprises 416 residues: 4-hydroxy-3-methylbut-2-en-1-yl diphosphate synthase (flavodoxin) (416 aa).

[4Fe-4S] cluster is bound by residues Cys-304, Cys-307, Cys-350, and Glu-357.

It belongs to the IspG family. The cofactor is [4Fe-4S] cluster.

It catalyses the reaction (2E)-4-hydroxy-3-methylbut-2-enyl diphosphate + oxidized [flavodoxin] + H2O + 2 H(+) = 2-C-methyl-D-erythritol 2,4-cyclic diphosphate + reduced [flavodoxin]. It participates in isoprenoid biosynthesis; isopentenyl diphosphate biosynthesis via DXP pathway; isopentenyl diphosphate from 1-deoxy-D-xylulose 5-phosphate: step 5/6. Functionally, converts 2C-methyl-D-erythritol 2,4-cyclodiphosphate (ME-2,4cPP) into 1-hydroxy-2-methyl-2-(E)-butenyl 4-diphosphate. The polypeptide is 4-hydroxy-3-methylbut-2-en-1-yl diphosphate synthase (flavodoxin) (Rhizobium etli (strain CIAT 652)).